Here is a 561-residue protein sequence, read N- to C-terminus: Potassium-transporting ATPase potassium-binding subunit (561 aa).

The next 10 helical transmembrane spans lie at 4–24 (IVMQ…PLGI), 65–85 (AVSV…VLML), 133–153 (IGLT…LFAV), 177–197 (LYIL…QGVV), 253–273 (FTNL…VVMF), 285–305 (AIMT…TISE), 380–400 (GLYG…LLVG), 417–437 (MVCL…AVAV), 484–504 (MVGA…ALYL), and 528–548 (FIGL…LPAL).

This sequence belongs to the KdpA family. In terms of assembly, the system is composed of three essential subunits: KdpA, KdpB and KdpC.

The protein resides in the cell membrane. Its function is as follows. Part of the high-affinity ATP-driven potassium transport (or Kdp) system, which catalyzes the hydrolysis of ATP coupled with the electrogenic transport of potassium into the cytoplasm. This subunit binds the extracellular potassium ions and delivers the ions to the membrane domain of KdpB through an intramembrane tunnel. The chain is Potassium-transporting ATPase potassium-binding subunit from Listeria monocytogenes serotype 4b (strain CLIP80459).